A 190-amino-acid polypeptide reads, in one-letter code: Peptide deformylase (190 aa).

C94 and H136 together coordinate Fe cation. The active site involves E137. H140 is a binding site for Fe cation.

Belongs to the polypeptide deformylase family. Requires Fe(2+) as cofactor.

It carries out the reaction N-terminal N-formyl-L-methionyl-[peptide] + H2O = N-terminal L-methionyl-[peptide] + formate. Functionally, removes the formyl group from the N-terminal Met of newly synthesized proteins. Requires at least a dipeptide for an efficient rate of reaction. N-terminal L-methionine is a prerequisite for activity but the enzyme has broad specificity at other positions. In Chlorobium phaeovibrioides (strain DSM 265 / 1930) (Prosthecochloris vibrioformis (strain DSM 265)), this protein is Peptide deformylase.